Reading from the N-terminus, the 382-residue chain is Protein shisa-9A (382 aa).

An N-terminal signal peptide occupies residues 1 to 26; that stretch reads MKWTVLLLEYFLVKVLVLLYSADGEA. Topologically, residues 27–132 are extracellular; sequence QQLEGFIMLS…DPRHDPTKDK (106 aa). N39 carries an N-linked (GlcNAc...) asparagine glycan. The chain crosses the membrane as a helical span at residues 133–153; the sequence is TNLIVYIICGVVAIMALVGIF. Residues 154–382 are Cytoplasmic-facing; the sequence is TKLGLEKAHR…VTNSKAEVTV (229 aa).

It belongs to the shisa family. SHISA9 subfamily. Component of some AMPA receptors (ionotropic glutamate receptors) complex.

It localises to the cell projection. Its subcellular location is the dendritic spine membrane. The protein localises to the synapse. Functionally, regulator of short-term neuronal synaptic plasticity in the dentate gyrus. Associates with AMPA receptors (ionotropic glutamate receptors) in synaptic spines and promotes AMPA receptor desensitization at excitatory synapses. The protein is Protein shisa-9A (shisa9a) of Danio rerio (Zebrafish).